Here is a 56-residue protein sequence, read N- to C-terminus: Photosystem II reaction center protein K (56 aa).

A propeptide spanning residues 1 to 19 (MLNFLLQNTFVLWSNFILC) is cleaved from the precursor. A helical membrane pass occupies residues 35 to 55 (MPVIPVFFFLLAFVWQAAVSF).

This sequence belongs to the PsbK family. As to quaternary structure, PSII is composed of 1 copy each of membrane proteins PsbA, PsbB, PsbC, PsbD, PsbE, PsbF, PsbH, PsbI, PsbJ, PsbK, PsbL, PsbM, PsbT, PsbX, PsbY, PsbZ, Psb30/Ycf12, at least 3 peripheral proteins of the oxygen-evolving complex and a large number of cofactors. It forms dimeric complexes.

It is found in the plastid. It localises to the chloroplast thylakoid membrane. One of the components of the core complex of photosystem II (PSII). PSII is a light-driven water:plastoquinone oxidoreductase that uses light energy to abstract electrons from H(2)O, generating O(2) and a proton gradient subsequently used for ATP formation. It consists of a core antenna complex that captures photons, and an electron transfer chain that converts photonic excitation into a charge separation. This chain is Photosystem II reaction center protein K, found in Welwitschia mirabilis (Tree tumbo).